A 476-amino-acid chain; its full sequence is UDP-glycosyltransferase 71C3 (476 aa).

UDP-alpha-D-glucose-binding positions include Ser290, 349–351, 366–374, and 388–391; these read APQ, HCGWNSVLE, and YAEQ.

This sequence belongs to the UDP-glycosyltransferase family.

Functionally, possesses low quercetin 3-O-glucosyltransferase activity in vitro. In Arabidopsis thaliana (Mouse-ear cress), this protein is UDP-glycosyltransferase 71C3 (UGT71C3).